A 486-amino-acid chain; its full sequence is HTH-type transcriptional regulator PrpR (486 aa).

Residues leucine 22–phenylalanine 76 form the HTH cro/C1-type domain. Positions glutamine 33–asparagine 52 form a DNA-binding region, H-T-H motif.

The protein belongs to the short-chain fatty acyl-CoA assimilation regulator (ScfR) family.

The protein operates within organic acid metabolism; propanoate degradation. It participates in steroid metabolism; cholesterol metabolism. Its function is as follows. Plays a key role in regulating expression of enzymes involved in the catabolism of short chain fatty acids (SCFA) via both the glyoxylate (acetyl degradation route) and the methylcitrate cycle (propionate degradation route). Required for intracellular growth in macrophages and for the assimilation of cholesterol-derived propionate. PrpR acts as a transcriptional activator of prpDC and icl genes when propionate is the main carbon source, and as a ramB repressor. During growth on propionate, PrpR also acts as a transcriptional repressor of dnaA, which encodes the DnaA initiator protein responsible for initiating chromosomal replication. It is possibly involved in the regulation of genes responsible for controlling cholesterol utilization. The polypeptide is HTH-type transcriptional regulator PrpR (Mycobacterium tuberculosis (strain ATCC 25618 / H37Rv)).